A 164-amino-acid chain; its full sequence is UPF0114 protein Spro_2386 (164 aa).

The next 3 helical transmembrane spans lie at 15-35, 53-73, and 136-156; these read LLAP…IKFF, LVLT…LVMV, and LMWY…MGYL.

Belongs to the UPF0114 family.

It localises to the cell membrane. The polypeptide is UPF0114 protein Spro_2386 (Serratia proteamaculans (strain 568)).